Consider the following 126-residue polypeptide: Holo-[acyl-carrier-protein] synthase (126 aa).

Positions 9 and 57 each coordinate Mg(2+).

This sequence belongs to the P-Pant transferase superfamily. AcpS family. Mg(2+) is required as a cofactor.

It is found in the cytoplasm. It catalyses the reaction apo-[ACP] + CoA = holo-[ACP] + adenosine 3',5'-bisphosphate + H(+). Its function is as follows. Transfers the 4'-phosphopantetheine moiety from coenzyme A to a Ser of acyl-carrier-protein. This is Holo-[acyl-carrier-protein] synthase from Pseudoalteromonas atlantica (strain T6c / ATCC BAA-1087).